The sequence spans 743 residues: Photosystem I P700 chlorophyll a apoprotein A2 (743 aa).

Transmembrane regions (helical) follow at residues 46–69, 135–158, 175–199, 273–291, 336–359, 375–401, 423–445, and 526–544; these read IFAT…FHVA, LYMG…LHLQ, LNHH…HVAI, MAHH…GHMY, LHFQ…QHMY, AALY…IFWV, AIIS…LYVH, and FLVH…LILV. Residues cysteine 568 and cysteine 577 each coordinate [4Fe-4S] cluster. 2 consecutive transmembrane segments (helical) span residues 584-605 and 652-674; these read AFYL…YWHW and LSVW…MFLI. Chlorophyll a contacts are provided by histidine 663, methionine 671, and tyrosine 679. Phylloquinone is bound at residue tryptophan 680. Residues 716–736 form a helical membrane-spanning segment; it reads LVGLTHFTVGYVLTYAAFLIA.

The protein belongs to the PsaA/PsaB family. In terms of assembly, the PsaA/B heterodimer binds the P700 chlorophyll special pair and subsequent electron acceptors. PSI consists of a core antenna complex that captures photons, and an electron transfer chain that converts photonic excitation into a charge separation. The cyanobacterial PSI reaction center is composed of one copy each of PsaA,B,C,D,E,F,I,J,K,L,M and X, and forms trimeric complexes. It depends on PSI electron transfer chain: 5 chlorophyll a, 1 chlorophyll a', 2 phylloquinones and 3 4Fe-4S clusters. PSI core antenna: 90 chlorophyll a, 22 carotenoids, 3 phospholipids and 1 galactolipid. P700 is a chlorophyll a/chlorophyll a' dimer, A0 is one or more chlorophyll a, A1 is one or both phylloquinones and FX is a shared 4Fe-4S iron-sulfur center. as a cofactor.

The protein resides in the cellular thylakoid membrane. It carries out the reaction reduced [plastocyanin] + hnu + oxidized [2Fe-2S]-[ferredoxin] = oxidized [plastocyanin] + reduced [2Fe-2S]-[ferredoxin]. In terms of biological role, psaA and PsaB bind P700, the primary electron donor of photosystem I (PSI), as well as the electron acceptors A0, A1 and FX. PSI is a plastocyanin/cytochrome c6-ferredoxin oxidoreductase, converting photonic excitation into a charge separation, which transfers an electron from the donor P700 chlorophyll pair to the spectroscopically characterized acceptors A0, A1, FX, FA and FB in turn. Oxidized P700 is reduced on the lumenal side of the thylakoid membrane by plastocyanin or cytochrome c6. The chain is Photosystem I P700 chlorophyll a apoprotein A2 from Mastigocladus laminosus (Fischerella sp.).